Consider the following 316-residue polypeptide: Apolipoprotein E (316 aa).

A signal peptide spans 1 to 18 (MKALWAVLVVTLLAGCLA). Tandem repeats lie at residues 76–97 (VLME…EQMG), 98–119 (PMAE…SRLG), 120–141 (ADME…TMLG), 142–163 (QSTE…KRLM), 164–185 (RDAE…EGAE), 186–207 (RGVG…QRTA), 208–229 (NLGA…ARIR), and 230–251 (GRLE…EQME). Residues 76-251 (VLMEDTMTEL…RLEEVREQME (176 aa)) form an 8 X 22 AA approximate tandem repeats region. Methionine sulfoxide is present on Met139. Ser143 carries the post-translational modification Phosphoserine. The tract at residues 154-164 (HLRKLRKRLMR) is LDL and other lipoprotein receptors binding. 158–161 (LRKR) provides a ligand contact to heparin. The tract at residues 206–286 (TANLGAGAAQ…GWFEPLVEDM (81 aa)) is lipid-binding and lipoprotein association. 225–232 (GARIRGRL) contributes to the heparin binding site. The interval 262-316 (QQMRLQAEIFQTRLKGWFEPLVEDMQRQWANLMEKIQASVATNPIPPSSVPQESQ) is homooligomerization. The segment at 274-286 (RLKGWFEPLVEDM) is specificity for association with VLDL.

The protein belongs to the apolipoprotein A1/A4/E family. Homotetramer. May interact with ABCA1; functionally associated with ABCA1 in the biogenesis of HDLs. May interact with APP/A4 amyloid-beta peptide; the interaction is extremely stable in vitro but its physiological significance is unclear. May interact with MAPT. May interact with MAP2. In the cerebrospinal fluid, interacts with secreted SORL1. Interacts with PMEL; this allows the loading of PMEL luminal fragment on ILVs to induce fibril nucleation. APOE exists as multiple glycosylated and sialylated glycoforms within cells and in plasma. The extent of glycosylation and sialylation are tissue and context specific. Post-translationally, glycated in plasma VLDL. In terms of processing, phosphorylated by FAM20C in the extracellular medium.

Its subcellular location is the secreted. It is found in the extracellular space. It localises to the extracellular matrix. The protein localises to the extracellular vesicle. The protein resides in the endosome. Its subcellular location is the multivesicular body. APOE is an apolipoprotein, a protein associating with lipid particles, that mainly functions in lipoprotein-mediated lipid transport between organs via the plasma and interstitial fluids. APOE is a core component of plasma lipoproteins and is involved in their production, conversion and clearance. Apolipoproteins are amphipathic molecules that interact both with lipids of the lipoprotein particle core and the aqueous environment of the plasma. As such, APOE associates with chylomicrons, chylomicron remnants, very low density lipoproteins (VLDL) and intermediate density lipoproteins (IDL) but shows a preferential binding to high-density lipoproteins (HDL). It also binds a wide range of cellular receptors including the LDL receptor/LDLR, the LDL receptor-related proteins LRP1, LRP2 and LRP8 and the very low-density lipoprotein receptor/VLDLR that mediate the cellular uptake of the APOE-containing lipoprotein particles. Finally, APOE also has a heparin-binding activity and binds heparan-sulfate proteoglycans on the surface of cells, a property that supports the capture and the receptor-mediated uptake of APOE-containing lipoproteins by cells. A main function of APOE is to mediate lipoprotein clearance through the uptake of chylomicrons, VLDLs, and HDLs by hepatocytes. APOE is also involved in the biosynthesis by the liver of VLDLs as well as their uptake by peripheral tissues ensuring the delivery of triglycerides and energy storage in muscle, heart and adipose tissues. By participating in the lipoprotein-mediated distribution of lipids among tissues, APOE plays a critical role in plasma and tissues lipid homeostasis. APOE is also involved in two steps of reverse cholesterol transport, the HDLs-mediated transport of cholesterol from peripheral tissues to the liver, and thereby plays an important role in cholesterol homeostasis. First, it is functionally associated with ABCA1 in the biogenesis of HDLs in tissues. Second, it is enriched in circulating HDLs and mediates their uptake by hepatocytes. APOE also plays an important role in lipid transport in the central nervous system, regulating neuron survival and sprouting. The protein is Apolipoprotein E (APOE) of Microtus ochrogaster (Prairie vole).